A 491-amino-acid polypeptide reads, in one-letter code: Aspartyl/glutamyl-tRNA(Asn/Gln) amidotransferase subunit B (491 aa).

Belongs to the GatB/GatE family. GatB subfamily. As to quaternary structure, heterotrimer of A, B and C subunits.

The catalysed reaction is L-glutamyl-tRNA(Gln) + L-glutamine + ATP + H2O = L-glutaminyl-tRNA(Gln) + L-glutamate + ADP + phosphate + H(+). It catalyses the reaction L-aspartyl-tRNA(Asn) + L-glutamine + ATP + H2O = L-asparaginyl-tRNA(Asn) + L-glutamate + ADP + phosphate + 2 H(+). Its function is as follows. Allows the formation of correctly charged Asn-tRNA(Asn) or Gln-tRNA(Gln) through the transamidation of misacylated Asp-tRNA(Asn) or Glu-tRNA(Gln) in organisms which lack either or both of asparaginyl-tRNA or glutaminyl-tRNA synthetases. The reaction takes place in the presence of glutamine and ATP through an activated phospho-Asp-tRNA(Asn) or phospho-Glu-tRNA(Gln). This is Aspartyl/glutamyl-tRNA(Asn/Gln) amidotransferase subunit B from Parasynechococcus marenigrum (strain WH8102).